The primary structure comprises 264 residues: Mediator of RNA polymerase II transcription subunit 4 (264 aa).

The interval 183–264 (LTKLPGQEDG…DLDLFNPDEF (82 aa)) is disordered. Positions 200-225 (NEDKNIVKDAEGAEGEIRQDDKKEDD) are enriched in basic and acidic residues. Acidic residues predominate over residues 236 to 264 (AEGDEDKNAGEDEDEAMDSDLDLFNPDEF).

The protein belongs to the Mediator complex subunit 4 family. As to quaternary structure, component of the Mediator complex.

The protein resides in the nucleus. Its function is as follows. Component of the Mediator complex, a coactivator involved in the regulated transcription of nearly all RNA polymerase II-dependent genes. Mediator functions as a bridge to convey information from gene-specific regulatory proteins to the basal RNA polymerase II transcription machinery. Mediator is recruited to promoters by direct interactions with regulatory proteins and serves as a scaffold for the assembly of a functional preinitiation complex with RNA polymerase II and the general transcription factors. This chain is Mediator of RNA polymerase II transcription subunit 4 (MED4), found in Candida glabrata (strain ATCC 2001 / BCRC 20586 / JCM 3761 / NBRC 0622 / NRRL Y-65 / CBS 138) (Yeast).